The following is a 265-amino-acid chain: Hydroxyethylthiazole kinase (265 aa).

Methionine 50 is a binding site for substrate. Arginine 125 and threonine 171 together coordinate ATP. Residue glycine 198 participates in substrate binding.

Belongs to the Thz kinase family. Mg(2+) is required as a cofactor.

It carries out the reaction 5-(2-hydroxyethyl)-4-methylthiazole + ATP = 4-methyl-5-(2-phosphooxyethyl)-thiazole + ADP + H(+). It participates in cofactor biosynthesis; thiamine diphosphate biosynthesis; 4-methyl-5-(2-phosphoethyl)-thiazole from 5-(2-hydroxyethyl)-4-methylthiazole: step 1/1. In terms of biological role, catalyzes the phosphorylation of the hydroxyl group of 4-methyl-5-beta-hydroxyethylthiazole (THZ). The sequence is that of Hydroxyethylthiazole kinase from Cronobacter sakazakii (strain ATCC BAA-894) (Enterobacter sakazakii).